The sequence spans 611 residues: Putative pentatricopeptide repeat-containing protein At1g56570 (611 aa).

13 PPR repeats span residues 44 to 74 (HHILATNLIVSYFEKGLVEEARSLFDEMPDR), 75 to 109 (DVVAWTAMITGYASSNYNARAWECFHEMVKQGTSP), 110 to 144 (NEFTLSSVLKSCRNMKVLAYGALVHGVVVKLGMEG), 145 to 176 (SLYVDNAMMNMYATCSVTMEAACLIFRDIKVK), 177 to 211 (NDVTWTTLITGFTHLGDGIGGLKMYKQMLLENAEV), 212 to 246 (TPYCITIAVRASASIDSVTTGKQIHASVIKRGFQS), 247 to 281 (NLPVMNSILDLYCRCGYLSEAKHYFHEMEDKDLIT), 282 to 311 (WNTLISELERSDSSEALLMFQRFESQGFVP), 312 to 346 (NCYTFTSLVAACANIAALNCGQQLHGRIFRRGFNK), 347 to 377 (NVELANALIDMYAKCGNIPDSQRVFGEIVDR), 379 to 413 (NLVSWTSMMIGYGSHGYGAEAVELFDKMVSSGIRP), 414 to 444 (DRIVFMAVLSACRHAGLVEKGLKYFNVMESE), and 450 to 480 (DRDIYNCVVDLLGRAGKIGEAYELVERMPFK). Residues 485–561 (TWGAILGACK…EAGMSWILVE (77 aa)) are type E motif. A type E(+) motif region spans residues 562–592 (NQVFSFAVSDKMCPNASSVYSVLGLLIEETR).

The protein belongs to the PPR family. PCMP-E subfamily.

In Arabidopsis thaliana (Mouse-ear cress), this protein is Putative pentatricopeptide repeat-containing protein At1g56570 (PCMP-E64).